The chain runs to 589 residues: Phenylalanine--tRNA ligase beta subunit (589 aa).

In terms of domain architecture, B5 spans 302–377 (LEVREERISV…IAYGYNNIKK (76 aa)). Residues Asp355, Asp361, Glu364, and Asp365 each contribute to the Mg(2+) site.

Belongs to the phenylalanyl-tRNA synthetase beta subunit family. Type 2 subfamily. Tetramer of two alpha and two beta subunits. Mg(2+) serves as cofactor.

The protein localises to the cytoplasm. It catalyses the reaction tRNA(Phe) + L-phenylalanine + ATP = L-phenylalanyl-tRNA(Phe) + AMP + diphosphate + H(+). This chain is Phenylalanine--tRNA ligase beta subunit, found in Drosophila melanogaster (Fruit fly).